Here is a 187-residue protein sequence, read N- to C-terminus: Threonylcarbamoyl-AMP synthase (187 aa).

The region spanning 4 to 187 (TLDLDRAVAT…DARSGQILRD (184 aa)) is the YrdC-like domain.

The protein belongs to the SUA5 family. TsaC subfamily.

It is found in the cytoplasm. The enzyme catalyses L-threonine + hydrogencarbonate + ATP = L-threonylcarbamoyladenylate + diphosphate + H2O. Its function is as follows. Required for the formation of a threonylcarbamoyl group on adenosine at position 37 (t(6)A37) in tRNAs that read codons beginning with adenine. Catalyzes the conversion of L-threonine, HCO(3)(-)/CO(2) and ATP to give threonylcarbamoyl-AMP (TC-AMP) as the acyladenylate intermediate, with the release of diphosphate. This chain is Threonylcarbamoyl-AMP synthase, found in Xanthomonas euvesicatoria pv. vesicatoria (strain 85-10) (Xanthomonas campestris pv. vesicatoria).